The chain runs to 35 residues: Photosystem II reaction center protein T (35 aa).

A helical transmembrane segment spans residues A3–F23.

It belongs to the PsbT family. PSII is composed of 1 copy each of membrane proteins PsbA, PsbB, PsbC, PsbD, PsbE, PsbF, PsbH, PsbI, PsbJ, PsbK, PsbL, PsbM, PsbT, PsbY, PsbZ, Psb30/Ycf12, at least 3 peripheral proteins of the oxygen-evolving complex and a large number of cofactors. It forms dimeric complexes.

It is found in the plastid. Its subcellular location is the chloroplast thylakoid membrane. Functionally, found at the monomer-monomer interface of the photosystem II (PS II) dimer, plays a role in assembly and dimerization of PSII. PSII is a light-driven water plastoquinone oxidoreductase, using light energy to abstract electrons from H(2)O, generating a proton gradient subsequently used for ATP formation. This Welwitschia mirabilis (Tree tumbo) protein is Photosystem II reaction center protein T.